Here is a 378-residue protein sequence, read N- to C-terminus: Filamin-binding LIM protein 1 (378 aa).

The filamin-binding stretch occupies residues 1–69; the sequence is MASKPEKRVA…RSWMPPGRAA (69 aa). Positions 38-179 are disordered; the sequence is WPGRPWESAP…PPPEEPVSFP (142 aa). Positions 103–115 are enriched in pro residues; it reads LPPPPPPPAADLP. 3 consecutive LIM zinc-binding domains span residues 186-247, 248-305, and 306-375; these read DICA…TLEK, CGKC…RKFA, and PVCS…RSAA. The interval 281–378 is PLEKHC1-binding; sequence IGDESFALDS…HVKRSAAGCC (98 aa).

As to quaternary structure, interacts with PLEKHC1, FLNA, FLNB and FLNC. Interacts with NKX2-5.

It localises to the cell junction. The protein resides in the focal adhesion. It is found in the cytoplasm. The protein localises to the cytoskeleton. Its subcellular location is the stress fiber. Its function is as follows. Serves as an anchoring site for cell-ECM adhesion proteins and filamin-containing actin filaments. Is implicated in cell shape modulation (spreading) and motility. May participate in the regulation of filamin-mediated cross-linking and stabilization of actin filaments. May also regulate the assembly of filamin-containing signaling complexes that control actin assembly. Promotes dissociation of FLNA from ITGB3 and ITGB7. Promotes activation of integrins and regulates integrin-mediated cell-cell adhesion. The polypeptide is Filamin-binding LIM protein 1 (FBLIM1) (Bos taurus (Bovine)).